The primary structure comprises 290 residues: GTPase Era (290 aa).

The region spanning 2–169 (KSGFVSIIGR…KDKIYENLQE (168 aa)) is the Era-type G domain. Residues 10–17 (GRPSTGKS) form a G1 region. Residue 10–17 (GRPSTGKS) participates in GTP binding. A G2 region spans residues 36–40 (QTTRN). The segment at 57–60 (DTPG) is G3. GTP is bound by residues 57-61 (DTPGF) and 119-122 (NKID). Positions 119-122 (NKID) are G4. The segment at 148–150 (ISA) is G5. A KH type-2 domain is found at 200-276 (LKEELPYSLY…DLFLQVKLRK (77 aa)).

It belongs to the TRAFAC class TrmE-Era-EngA-EngB-Septin-like GTPase superfamily. Era GTPase family. Monomer.

It is found in the cytoplasm. The protein localises to the cell inner membrane. Functionally, an essential GTPase that binds both GDP and GTP, with rapid nucleotide exchange. Plays a role in 16S rRNA processing and 30S ribosomal subunit biogenesis and possibly also in cell cycle regulation and energy metabolism. The chain is GTPase Era from Borrelia turicatae (strain 91E135).